A 317-amino-acid polypeptide reads, in one-letter code: Protoheme IX farnesyltransferase (317 aa).

9 helical membrane passes run 39-58, 62-84, 100-120, 123-143, 160-180, 184-204, 233-253, 256-276, and 293-313; these read VMSLVVFTGLIGMLVAPGSL, LGAIAILCIAVATGASGAINMWY, IPAGRIEPGEALGYGIVLAVG, LVMWLATNVVAAAVLAFAIFF, IVIGGAAGAFPPVIGWAAVTG, LMPVMMFAIVFFWTPPHFWSL, IMAYTVLLSVIAVLPWALGDT, VYGLSAVVLSLGFLVQSWRVL, and ARAAFKYSLIYLAVLFLALAV.

This sequence belongs to the UbiA prenyltransferase family. Protoheme IX farnesyltransferase subfamily.

The protein resides in the cell inner membrane. It catalyses the reaction heme b + (2E,6E)-farnesyl diphosphate + H2O = Fe(II)-heme o + diphosphate. Its pathway is porphyrin-containing compound metabolism; heme O biosynthesis; heme O from protoheme: step 1/1. Converts heme B (protoheme IX) to heme O by substitution of the vinyl group on carbon 2 of heme B porphyrin ring with a hydroxyethyl farnesyl side group. In Granulibacter bethesdensis (strain ATCC BAA-1260 / CGDNIH1), this protein is Protoheme IX farnesyltransferase.